The chain runs to 466 residues: Muscarinic acetylcholine receptor M2 (466 aa).

Over 1-22 the chain is Extracellular; sequence MNNSTNSSNNGLAITSPYKTFE. N-linked (GlcNAc...) asparagine glycosylation is found at Asn-2, Asn-3, and Asn-6. A helical transmembrane segment spans residues 23 to 45; the sequence is VVFIVLVAGSLSLVTIIGNILVM. The Cytoplasmic segment spans residues 46–59; it reads VSIKVNRHLQTVNN. Residues 60–80 traverse the membrane as a helical segment; that stretch reads YFLFSLACADLIIGVFSMNLY. The Extracellular portion of the chain corresponds to 81–97; the sequence is TLYTVIGYWPLGPVVCD. A disulfide bridge links Cys-96 with Cys-176. The helical transmembrane segment at 98–119 threads the bilayer; sequence LWLALDYVVSNASVMNLLIISF. Residues 120–122 carry the Important for signaling motif; sequence DRY. The Cytoplasmic portion of the chain corresponds to 120 to 139; that stretch reads DRYFCVTKPLTYPVKRTTKM. A helical transmembrane segment spans residues 140-162; the sequence is AGMMIAAAWVLSFILWAPAILFW. At 163 to 184 the chain is on the extracellular side; sequence QFIVGVRTVEDGECYIQFFSNA. A helical membrane pass occupies residues 185–209; the sequence is AVTFGTAIAAFYLPVIIMTVLYWHI. The Cytoplasmic segment spans residues 210–387; sequence SRASKSRIKK…PPSREKKVTR (178 aa). The disordered stretch occupies residues 218-320; it reads KKEKKEPVAN…SLGHSKDDNS (103 aa). Ser-232 bears the Phosphoserine mark. Positions 254-270 are enriched in basic and acidic residues; it reads GLEHNKIQNGKAPRDGG. 2 stretches are compositionally biased toward polar residues: residues 284–293 and 304–313; these read NDSTSVSAVA and DENTVSTSLG. A helical membrane pass occupies residues 388–410; it reads TILAILLAFIITWAPYNVMVLIN. Over 411–418 the chain is Extracellular; sequence TFCAPCIP. A disulfide bridge links Cys-413 with Cys-416. The chain crosses the membrane as a helical span at residues 419 to 442; the sequence is NTVWTIGYWLCYINSTINPACYAL. An Important for signaling motif is present at residues 436–440; sequence NPACY. The Cytoplasmic segment spans residues 443-466; sequence CNATFKKTFKHLLMCHYKNIGATR. Residues Thr-446, Thr-450, and Thr-465 each carry the phosphothreonine modification.

This sequence belongs to the G-protein coupled receptor 1 family. Muscarinic acetylcholine receptor subfamily. CHRM2 sub-subfamily. As to quaternary structure, interacts with ARRB1 and ARRB2. Interacts with RACK1; the interaction regulates CHRM2 internalization. In terms of processing, phosphorylated in response to agonist treatment.

The protein resides in the cell membrane. Its subcellular location is the postsynaptic cell membrane. Its function is as follows. The muscarinic acetylcholine receptor mediates various cellular responses, including inhibition of adenylate cyclase, breakdown of phosphoinositides and modulation of potassium channels through the action of G proteins. Primary transducing effect is adenylate cyclase inhibition. Signaling promotes phospholipase C activity, leading to the release of inositol trisphosphate (IP3); this then triggers calcium ion release into the cytosol. This Mus musculus (Mouse) protein is Muscarinic acetylcholine receptor M2 (Chrm2).